The following is a 662-amino-acid chain: Glycogen debranching enzyme (662 aa).

Asp-338 acts as the Nucleophile in catalysis. Residue Glu-373 is the Proton donor of the active site.

It belongs to the glycosyl hydrolase 13 family.

The enzyme catalyses Hydrolysis of (1-&gt;6)-alpha-D-glucosidic linkages to branches with degrees of polymerization of three or four glucose residues in limit dextrin.. It functions in the pathway glycan degradation; glycogen degradation. Functionally, removes maltotriose and maltotetraose chains that are attached by 1,6-alpha-linkage to the limit dextrin main chain, generating a debranched limit dextrin. In Yersinia pseudotuberculosis serotype IB (strain PB1/+), this protein is Glycogen debranching enzyme.